Reading from the N-terminus, the 248-residue chain is Pyridoxine 5'-phosphate synthase (248 aa).

Residue asparagine 12 participates in 3-amino-2-oxopropyl phosphate binding. 14 to 15 (DH) serves as a coordination point for 1-deoxy-D-xylulose 5-phosphate. A 3-amino-2-oxopropyl phosphate-binding site is contributed by arginine 23. Histidine 48 acts as the Proton acceptor in catalysis. Arginine 50 and histidine 55 together coordinate 1-deoxy-D-xylulose 5-phosphate. Catalysis depends on glutamate 75, which acts as the Proton acceptor. Threonine 105 lines the 1-deoxy-D-xylulose 5-phosphate pocket. The active-site Proton donor is the histidine 196. 3-amino-2-oxopropyl phosphate contacts are provided by residues glycine 197 and 218–219 (GH).

Belongs to the PNP synthase family. As to quaternary structure, homooctamer; tetramer of dimers.

It is found in the cytoplasm. It catalyses the reaction 3-amino-2-oxopropyl phosphate + 1-deoxy-D-xylulose 5-phosphate = pyridoxine 5'-phosphate + phosphate + 2 H2O + H(+). It functions in the pathway cofactor biosynthesis; pyridoxine 5'-phosphate biosynthesis; pyridoxine 5'-phosphate from D-erythrose 4-phosphate: step 5/5. Catalyzes the complicated ring closure reaction between the two acyclic compounds 1-deoxy-D-xylulose-5-phosphate (DXP) and 3-amino-2-oxopropyl phosphate (1-amino-acetone-3-phosphate or AAP) to form pyridoxine 5'-phosphate (PNP) and inorganic phosphate. The protein is Pyridoxine 5'-phosphate synthase of Pseudomonas aeruginosa (strain LESB58).